The following is a 629-amino-acid chain: Probable indole-3-acetic acid-amido synthetase GH3.4 (629 aa).

Belongs to the IAA-amido conjugating enzyme family. In terms of tissue distribution, expressed in flowers.

Its function is as follows. May catalyze the synthesis of indole-3-acetic acid (IAA)-amino acid conjugates, providing a mechanism for the plant to cope with the presence of excess auxin. The chain is Probable indole-3-acetic acid-amido synthetase GH3.4 (GH3.4) from Oryza sativa subsp. japonica (Rice).